Here is a 221-residue protein sequence, read N- to C-terminus: Protein DEHYDRATION-INDUCED 19 homolog 2 (221 aa).

2 disordered regions span residues 1–24 (MEDD…TAAK) and 162–193 (VLPD…SDSD).

It belongs to the Di19 family. Post-translationally, not phosphorylated in vitro by CPK3 or CPK11. As to expression, expressed in seedlings, roots, leaves, stems, flowers and siliques.

The protein resides in the cytoplasm. It localises to the nucleus. The polypeptide is Protein DEHYDRATION-INDUCED 19 homolog 2 (DI19-2) (Arabidopsis thaliana (Mouse-ear cress)).